Here is a 429-residue protein sequence, read N- to C-terminus: UDP-N-acetylglucosamine 1-carboxyvinyltransferase (429 aa).

22–23 (KN) provides a ligand contact to phosphoenolpyruvate. Residue Arg102 participates in UDP-N-acetyl-alpha-D-glucosamine binding. The Proton donor role is filled by Cys126. Cys126 is subject to 2-(S-cysteinyl)pyruvic acid O-phosphothioketal. Residues 131-135 (RPVDL), Asp316, and Ile338 contribute to the UDP-N-acetyl-alpha-D-glucosamine site.

This sequence belongs to the EPSP synthase family. MurA subfamily.

It is found in the cytoplasm. The catalysed reaction is phosphoenolpyruvate + UDP-N-acetyl-alpha-D-glucosamine = UDP-N-acetyl-3-O-(1-carboxyvinyl)-alpha-D-glucosamine + phosphate. It functions in the pathway cell wall biogenesis; peptidoglycan biosynthesis. Cell wall formation. Adds enolpyruvyl to UDP-N-acetylglucosamine. This Nitrobacter winogradskyi (strain ATCC 25391 / DSM 10237 / CIP 104748 / NCIMB 11846 / Nb-255) protein is UDP-N-acetylglucosamine 1-carboxyvinyltransferase.